Reading from the N-terminus, the 404-residue chain is uncharacterized protein (404 aa).

The next 6 membrane-spanning stretches (helical) occupy residues 37 to 57 (LLIL…FVQF), 92 to 112 (IYNV…FVLG), 122 to 142 (LLTL…SYIP), 188 to 208 (MFYA…ILII), 230 to 250 (IGGI…TIGT), and 272 to 292 (AFFL…LGIF).

Its subcellular location is the cell membrane. This is an uncharacterized protein from Mycoplasma pneumoniae (strain ATCC 29342 / M129 / Subtype 1) (Mycoplasmoides pneumoniae).